The primary structure comprises 732 residues: Interleukin-31 receptor subunit alpha (732 aa).

Positions 1 to 19 (MMWTWALWMLPSLCKFSLA) are cleaved as a signal peptide. The Extracellular segment spans residues 20–519 (ALPAKPENIS…FKTLSFSVFE (500 aa)). Fibronectin type-III domains follow at residues 24–122 (KPEN…IAKT), 124–225 (PPKI…TEEE), 223–315 (EEEA…PVAT), 319–416 (PAIQ…QAYA), and 421–515 (PSEG…TLSF). 10 N-linked (GlcNAc...) asparagine glycosylation sites follow: asparagine 37, asparagine 67, asparagine 93, asparagine 166, asparagine 187, asparagine 277, asparagine 283, asparagine 395, asparagine 455, and asparagine 504. Residues 520-540 (IILITSLIGGGLLILIILTVA) traverse the membrane as a helical segment. The Cytoplasmic segment spans residues 541-732 (YGLKKPNKLT…KLPEHTKGEV (192 aa)).

The protein belongs to the type I cytokine receptor family. Type 2 subfamily. As to quaternary structure, heterodimer with OSMR. Interacts with JAK1 and STAT3. In terms of processing, N-glycosylated. Expressed in CD14- and CD56-positive blood cells. Expressed in macrophages. Expressed in keratinocytes. Expressed in a subset of dorsal root ganglia neurons (at protein level). Expressed at low levels in testis, ovary, brain, prostate, placenta, thymus, bone marrow, trachea and skin. Expressed in bronchial and alveolar epithelial cells and pulmonary fibroblasts. Detected in all of the myelomonocytic lineage. Isoform 6: Expressed at higher levels in lesional skin compared to healthy skin of atopic dermatitis patients.

It is found in the cell membrane. Its subcellular location is the presynaptic cell membrane. It localises to the cell projection. The protein resides in the axon. Functionally, associates with OSMR to form the interleukin-31 receptor which activates STAT3 and to a lower extent STAT1 and STAT5. May function in skin immunity. Mediates IL31-induced itch, probably in a manner dependent on cation channels TRPA1 and TRPV1. Positively regulates numbers and cycling status of immature subsets of myeloid progenitor cells in bone marrow in vivo and enhances myeloid progenitor cell survival in vitro. The protein is Interleukin-31 receptor subunit alpha (IL31RA) of Homo sapiens (Human).